We begin with the raw amino-acid sequence, 277 residues long: Protein OPG166 (277 aa).

Asn29 and Asn58 each carry an N-linked (GlcNAc...) asparagine; by host glycan. 5 helical membrane-spanning segments follow: residues Thr124–Tyr144, Gly156–Phe176, Ile186–Ser206, Leu219–Leu239, and Leu247–Val267.

It belongs to the orthopoxvirus OPG166 protein family.

Its subcellular location is the host membrane. Promotes, when overexpressed, the influx of extracellular Ca(2+), leading to membrane permeability and host cell necrosis. This chain is Protein OPG166 (OPG166), found in Vaccinia virus (strain Copenhagen) (VACV).